A 337-amino-acid chain; its full sequence is UDP-glucose 4-epimerase (337 aa).

Residues 11–12 (YI), 31–36 (DNLSNA), 58–59 (DL), 80–84 (FAGLK), asparagine 99, serine 124, tyrosine 149, lysine 153, and phenylalanine 178 each bind NAD(+). Residues serine 124 and tyrosine 149 each coordinate substrate. Tyrosine 149 functions as the Proton acceptor in the catalytic mechanism. Residues asparagine 179, 199–200 (NL), 216–218 (GIF), arginine 231, and 292–295 (RDGD) contribute to the substrate site.

This sequence belongs to the NAD(P)-dependent epimerase/dehydratase family. As to quaternary structure, homodimer. NAD(+) is required as a cofactor.

The enzyme catalyses UDP-alpha-D-glucose = UDP-alpha-D-galactose. It participates in carbohydrate metabolism; galactose metabolism. Functionally, involved in the metabolism of galactose. Catalyzes the conversion of UDP-galactose (UDP-Gal) to UDP-glucose (UDP-Glc) through a mechanism involving the transient reduction of NAD. The sequence is that of UDP-glucose 4-epimerase (galE) from Erwinia amylovora (Fire blight bacteria).